Reading from the N-terminus, the 300-residue chain is HTH-type transcriptional regulator ArgP (300 aa).

Residues 4–60 (PDYRTLQALDAVIRERGFERAAQKLCITQSAVSQRIKQLENLFGQPLLVRTVPPRPT) form the HTH lysR-type domain. The segment at residues 21–40 (FERAAQKLCITQSAVSQRIK) is a DNA-binding region (H-T-H motif).

This sequence belongs to the LysR transcriptional regulatory family. In terms of assembly, homodimer.

Controls the transcription of genes involved in arginine and lysine metabolism. This is HTH-type transcriptional regulator ArgP from Photorhabdus laumondii subsp. laumondii (strain DSM 15139 / CIP 105565 / TT01) (Photorhabdus luminescens subsp. laumondii).